The following is a 246-amino-acid chain: O-antigen export system ATP-binding protein RfbB (246 aa).

Residues 22–246 (SGIKDLIFHP…IIELYKQAMA (225 aa)) form the ABC transporter domain. Residue 63 to 70 (GRNGAGKS) participates in ATP binding.

It belongs to the ABC transporter superfamily.

Its subcellular location is the cell inner membrane. In terms of biological role, may form an ATP-driven O-antigen export apparatus, in association with RfbA. In Klebsiella pneumoniae, this protein is O-antigen export system ATP-binding protein RfbB (rfbB).